We begin with the raw amino-acid sequence, 641 residues long: Chaperone protein DnaK (641 aa).

Position 200 is a phosphothreonine; by autocatalysis (Thr200). Over residues Ala602–Ser611 the composition is skewed to low complexity. Positions Ala602–Ala641 are disordered. Residues Glu630–Ala641 are compositionally biased toward basic and acidic residues.

This sequence belongs to the heat shock protein 70 family.

In terms of biological role, acts as a chaperone. The sequence is that of Chaperone protein DnaK from Methylacidiphilum infernorum (isolate V4) (Methylokorus infernorum (strain V4)).